We begin with the raw amino-acid sequence, 420 residues long: Tryptophan--tRNA ligase (420 aa).

A 'HIGH' region motif is present at residues 72–80 (PSGLPHFGH). A 'KMSKS' region motif is present at residues 308-312 (KMSSS).

Belongs to the class-I aminoacyl-tRNA synthetase family.

Its subcellular location is the cytoplasm. It catalyses the reaction tRNA(Trp) + L-tryptophan + ATP = L-tryptophyl-tRNA(Trp) + AMP + diphosphate + H(+). This Archaeoglobus fulgidus (strain ATCC 49558 / DSM 4304 / JCM 9628 / NBRC 100126 / VC-16) protein is Tryptophan--tRNA ligase.